The chain runs to 386 residues: Bifunctional enzyme IspD/IspF (386 aa).

Residues 1–231 form a 2-C-methyl-D-erythritol 4-phosphate cytidylyltransferase region; that stretch reads MKNGAVIIPA…REKKEPMQKI (231 aa). Positions 232 to 386 are 2-C-methyl-D-erythritol 2,4-cyclodiphosphate synthase; that stretch reads RIGHGFDAHQ…SCHAVVLLQQ (155 aa). The a divalent metal cation site is built by D238 and H240. 4-CDP-2-C-methyl-D-erythritol 2-phosphate contacts are provided by residues 238–240 and 264–265; these read DAH and HS. H272 is an a divalent metal cation binding site. Residues 286–288, 362–365, Y369, and R372 contribute to the 4-CDP-2-C-methyl-D-erythritol 2-phosphate site; these read DIG and TTTE.

It in the N-terminal section; belongs to the IspD/TarI cytidylyltransferase family. IspD subfamily. In the C-terminal section; belongs to the IspF family. Requires a divalent metal cation as cofactor.

The catalysed reaction is 2-C-methyl-D-erythritol 4-phosphate + CTP + H(+) = 4-CDP-2-C-methyl-D-erythritol + diphosphate. The enzyme catalyses 4-CDP-2-C-methyl-D-erythritol 2-phosphate = 2-C-methyl-D-erythritol 2,4-cyclic diphosphate + CMP. It participates in isoprenoid biosynthesis; isopentenyl diphosphate biosynthesis via DXP pathway; isopentenyl diphosphate from 1-deoxy-D-xylulose 5-phosphate: step 2/6. Its pathway is isoprenoid biosynthesis; isopentenyl diphosphate biosynthesis via DXP pathway; isopentenyl diphosphate from 1-deoxy-D-xylulose 5-phosphate: step 4/6. In terms of biological role, bifunctional enzyme that catalyzes the formation of 4-diphosphocytidyl-2-C-methyl-D-erythritol from CTP and 2-C-methyl-D-erythritol 4-phosphate (MEP) (IspD), and catalyzes the conversion of 4-diphosphocytidyl-2-C-methyl-D-erythritol 2-phosphate (CDP-ME2P) to 2-C-methyl-D-erythritol 2,4-cyclodiphosphate (ME-CPP) with a corresponding release of cytidine 5-monophosphate (CMP) (IspF). This Desulfotalea psychrophila (strain LSv54 / DSM 12343) protein is Bifunctional enzyme IspD/IspF.